Here is a 321-residue protein sequence, read N- to C-terminus: Glucokinase (321 aa).

Gly8 to Thr13 is a binding site for ATP.

It belongs to the bacterial glucokinase family.

Its subcellular location is the cytoplasm. It catalyses the reaction D-glucose + ATP = D-glucose 6-phosphate + ADP + H(+). This Shigella dysenteriae serotype 1 (strain Sd197) protein is Glucokinase.